The chain runs to 28 residues: Mast cell degranulating peptide (28 aa).

Cystine bridges form between C2–C18 and C4–C22.

As to expression, expressed by the venom gland.

It localises to the secreted. Its function is as follows. Mast cell degranulating peptide. The polypeptide is Mast cell degranulating peptide (Bombus pensylvanicus (American bumblebee)).